The primary structure comprises 201 residues: MNMEVDTVTRKPRILLAASGSVASIKFSNLCHCFSEWAEVKAVASKSSLNFVDKPSLPQNVTLYTDEDEWSSWNKIGDPVLHIELRRWADVMIIAPLSANTLAKIAGGLCDNLLTCIVRAWDYSKPLFVAPAMNTLMWNNPFTERHLVLLDELGITLIPPIKKKLACGDYGNGAMAEPSLIYSTVRLFWESQARKQRDGTS.

FMN contacts are provided by residues 20 to 22 (GSV), 45 to 47 (SKS), 98 to 101 (SANT), and Ala132. Substrate-binding positions include Asn134 and 164–166 (KLA). Residue Cys167 is the Proton donor of the active site. Met175 serves as a coordination point for substrate.

The protein belongs to the HFCD (homooligomeric flavin containing Cys decarboxylase) superfamily. Homotrimer. FMN serves as cofactor. As to expression, expressed in roots, shoots, leaves, flowers, developing siliques and seeds.

It carries out the reaction N-[(R)-4-phosphopantothenoyl]-L-cysteine + H(+) = (R)-4'-phosphopantetheine + CO2. It participates in cofactor biosynthesis; coenzyme A biosynthesis; CoA from (R)-pantothenate: step 3/5. Its function is as follows. Involved in plant growth and salt and osmotic tolerance. Catalyzes the decarboxylation of 4'-phosphopantothenoylcysteine to 4'-phosphopantetheine, a key step in coenzyme A biosynthesis. The enzyme is also able to decarboxylate pantothenoylcysteine to pantothenoylcysteamine. In Arabidopsis thaliana (Mouse-ear cress), this protein is Probable phosphopantothenoylcysteine decarboxylase (HAL3B).